Here is a 440-residue protein sequence, read N- to C-terminus: Replication factor C large subunit (440 aa).

48–55 (GPPGVGKT) contributes to the ATP binding site.

The protein belongs to the activator 1 small subunits family. RfcL subfamily. As to quaternary structure, heteromultimer composed of small subunits (RfcS) and large subunits (RfcL).

Its function is as follows. Part of the RFC clamp loader complex which loads the PCNA sliding clamp onto DNA. The sequence is that of Replication factor C large subunit from Sulfurisphaera tokodaii (strain DSM 16993 / JCM 10545 / NBRC 100140 / 7) (Sulfolobus tokodaii).